The following is a 384-amino-acid chain: Succinyl-diaminopimelate desuccinylase (384 aa).

Residue histidine 73 coordinates Zn(2+). Aspartate 75 is a catalytic residue. A Zn(2+)-binding site is contributed by aspartate 106. Glutamate 140 functions as the Proton acceptor in the catalytic mechanism. Positions 141, 169, and 358 each coordinate Zn(2+).

It belongs to the peptidase M20A family. DapE subfamily. In terms of assembly, homodimer. The cofactor is Zn(2+). Co(2+) is required as a cofactor.

The catalysed reaction is N-succinyl-(2S,6S)-2,6-diaminopimelate + H2O = (2S,6S)-2,6-diaminopimelate + succinate. Its pathway is amino-acid biosynthesis; L-lysine biosynthesis via DAP pathway; LL-2,6-diaminopimelate from (S)-tetrahydrodipicolinate (succinylase route): step 3/3. In terms of biological role, catalyzes the hydrolysis of N-succinyl-L,L-diaminopimelic acid (SDAP), forming succinate and LL-2,6-diaminopimelate (DAP), an intermediate involved in the bacterial biosynthesis of lysine and meso-diaminopimelic acid, an essential component of bacterial cell walls. The protein is Succinyl-diaminopimelate desuccinylase of Pelagibacter ubique (strain HTCC1062).